Here is a 132-residue protein sequence, read N- to C-terminus: Small ribosomal subunit protein uS8 (132 aa).

It belongs to the universal ribosomal protein uS8 family. As to quaternary structure, part of the 30S ribosomal subunit. Contacts proteins S5 and S12.

Functionally, one of the primary rRNA binding proteins, it binds directly to 16S rRNA central domain where it helps coordinate assembly of the platform of the 30S subunit. The protein is Small ribosomal subunit protein uS8 of Macrococcus caseolyticus (strain JCSC5402) (Macrococcoides caseolyticum).